A 389-amino-acid chain; its full sequence is Metal tolerance protein 2 (389 aa).

At Met1–Arg81 the chain is on the cytoplasmic side. A helical transmembrane segment spans residues Leu82–Gly102. The Vacuolar portion of the chain corresponds to Ser103–Thr104. The chain crosses the membrane as a helical span at residues Ala105–Leu125. Residues Ser126 to Leu148 are Cytoplasmic-facing. Residues Gly149–Phe169 traverse the membrane as a helical segment. Residues Asp170–His206 are Vacuolar-facing. A helical membrane pass occupies residues Pro207–Ile227. Residues Thr228–Asp250 are Cytoplasmic-facing. The helical transmembrane segment at Ala251–Leu271 threads the bilayer. Over Asp272 to Ala275 the chain is Vacuolar. The chain crosses the membrane as a helical span at residues Gly276–Leu296. Residues Glu297–Leu389 lie on the Cytoplasmic side of the membrane.

The protein belongs to the cation diffusion facilitator (CDF) transporter (TC 2.A.4) family. SLC30A subfamily.

The protein resides in the vacuole membrane. In terms of biological role, involved in sequestration of excess metal in the cytoplasm into vacuoles to maintain metal homeostasis. In Oryza sativa subsp. japonica (Rice), this protein is Metal tolerance protein 2 (MTP2).